We begin with the raw amino-acid sequence, 309 residues long: RuBisCO operon transcriptional regulator (309 aa).

Residues 6 to 63 form the HTH lysR-type domain; it reads ATLHQLKIFAAVARHMSFARAAEELHLTPPALSIQVRQLAEAVGQPLFDQIGKKIYLT. The H-T-H motif DNA-binding region spans 23-42; the sequence is FARAAEELHLTPPALSIQVR.

It belongs to the LysR transcriptional regulatory family.

Functionally, trans-acting transcriptional regulator of RuBisCO genes (rbcL1S1) expression. This is RuBisCO operon transcriptional regulator (rbcR) from Acidithiobacillus ferrooxidans (Thiobacillus ferrooxidans).